The chain runs to 262 residues: Phosphonates import ATP-binding protein PhnC 3 (262 aa).

The ABC transporter domain maps to 3–245 (IQLECLSVTY…ELNRIYGNAE (243 aa)). 36–43 (GASGSGKS) lines the ATP pocket.

Belongs to the ABC transporter superfamily. Phosphonates importer (TC 3.A.1.9.1) family. As to quaternary structure, the complex is composed of two ATP-binding proteins (PhnC), two transmembrane proteins (PhnE) and a solute-binding protein (PhnD).

Its subcellular location is the cell inner membrane. It catalyses the reaction phosphonate(out) + ATP + H2O = phosphonate(in) + ADP + phosphate + H(+). In terms of biological role, part of the ABC transporter complex PhnCDE involved in phosphonates import. Responsible for energy coupling to the transport system. The sequence is that of Phosphonates import ATP-binding protein PhnC 3 from Nostoc sp. (strain PCC 7120 / SAG 25.82 / UTEX 2576).